The chain runs to 249 residues: DNA repair protein RecO (249 aa).

This sequence belongs to the RecO family.

In terms of biological role, involved in DNA repair and RecF pathway recombination. This chain is DNA repair protein RecO, found in Mycoplasma capricolum subsp. capricolum (strain California kid / ATCC 27343 / NCTC 10154).